The primary structure comprises 333 residues: Adenosine deaminase (333 aa).

Zn(2+)-binding residues include histidine 12 and histidine 14. 3 residues coordinate substrate: histidine 14, aspartate 16, and glycine 170. Histidine 197 is a binding site for Zn(2+). Glutamate 200 acts as the Proton donor in catalysis. A Zn(2+)-binding site is contributed by aspartate 278. Residue aspartate 279 participates in substrate binding.

Belongs to the metallo-dependent hydrolases superfamily. Adenosine and AMP deaminases family. Adenosine deaminase subfamily. It depends on Zn(2+) as a cofactor.

It catalyses the reaction adenosine + H2O + H(+) = inosine + NH4(+). The catalysed reaction is 2'-deoxyadenosine + H2O + H(+) = 2'-deoxyinosine + NH4(+). Its function is as follows. Catalyzes the hydrolytic deamination of adenosine and 2-deoxyadenosine. In Escherichia coli O7:K1 (strain IAI39 / ExPEC), this protein is Adenosine deaminase.